The following is a 478-amino-acid chain: Transcript termination protein A18 (478 aa).

A Helicase ATP-binding domain is found at 98 to 254 (KLSTHRPMYM…NDVVNVLKVS (157 aa)). 111 to 118 (LSCGFGKT) lines the ATP pocket. The short motif at 204 to 207 (DESH) is the DESH box element. Positions 302-468 (PRNNLIVETV…GIEGTKEEPV (167 aa)) constitute a Helicase C-terminal domain.

This sequence belongs to the helicase family. Poxviruses subfamily. As to quaternary structure, interacts with G2. Might be part of a transcription complex composed at least of G2, A18, and H5.

It is found in the virion. In terms of biological role, DNA helicase which seems to act as a postreplicative transcription termination factor. Involved in ATP-dependent release of nascent RNA. Forms a stable complex with single-stranded DNA, and to a lesser extent RNA. This chain is Transcript termination protein A18, found in Rabbit fibroma virus (strain Kasza) (RFV).